The primary structure comprises 435 residues: Zinc finger CCCH domain-containing protein 67 (435 aa).

Residues 1-91 (MSKPEETSDP…DQKEEEEGSE (91 aa)) form a disordered region. 3 consecutive C3H1-type zinc fingers follow at residues 101 to 129 (RPDSEDCSFYMRTGSCKYGSSCKFNHPVR), 148 to 176 (NPKLMECKYYFRTGGCKYGESCRFSHMKE), and 194 to 222 (RPGEKECPFYMRNGSCKFGSDCKFNHPDP). The tract at residues 235–274 (GNNGGSFSPKAPSQASSTSWSSTRHMNGTGTAPFIPSMFP) is disordered. Positions 247-256 (SQASSTSWSS) are enriched in low complexity. 2 consecutive C3H1-type zinc fingers follow at residues 334-362 (RPDQPECTYYLKTGDCKFKYKCKYHHPKN) and 380-408 (RPDQSMCTHYSRYGICKFGPACRFDHSIP). The interval 412–435 (SPSSSQTVEARQVGANGNEDDSWH) is disordered.

The protein resides in the nucleus. This is Zinc finger CCCH domain-containing protein 67 from Arabidopsis thaliana (Mouse-ear cress).